The sequence spans 364 residues: MEAVKDVLCMNNGVGENSYVKAEALTIKVMAITKPIVPKAVQSLFTETDHSIPLQVVNVADLGCAVGPQPLEFMSTVIESILKKCGEMGREMPEIQFFLNDLVGNDFNTLFKGLSVVQEKYKKVSWFAMGAPGSFHGRLFPRNSMHLVYSCYSVHWLSEAPKITNEAGLPLNKGKIYMSKTSPPAVTKAYLSQFQEDFSSLLKFRSQELAPNGRVVLIFNGRQTADPTNKDTCYTWDLLAEALSYLVSQGLVDEGKLDSFNVPYYNPSQEEIKYLVDKEGSLTIEFIDTIELEIGGPNGYWSSPESRIRGHRCFTEPLLSHQFGERLMDKLYDKATQILVEDYKHGKEATKNIGIAVVLKKKKL.

Tyr19 serves as a coordination point for S-adenosyl-L-homocysteine. Thr26 serves as a coordination point for theobromine. S-adenosyl-L-homocysteine-binding residues include Cys64, Gln69, Asp101, Leu102, Ser134, and Phe135. Residues Tyr152, His155, and Trp156 each coordinate theobromine. Mg(2+)-binding residues include Asn172, Asp258, Phe260, and Asn261. Theobromine is bound at residue Phe314.

It belongs to the methyltransferase superfamily. Type-7 methyltransferase family. Mg(2+) serves as cofactor.

It carries out the reaction 7-methylxanthine + S-adenosyl-L-methionine = theobromine + S-adenosyl-L-homocysteine + H(+). The protein operates within alkaloid biosynthesis. Involved in the biosynthesis of theobromine. The polypeptide is Probable 7-methylxanthine methyltransferase 5 (Theobroma cacao (Cacao)).